The following is a 1053-amino-acid chain: Mgp-operon protein 3 (1053 aa).

The first 25 residues, 1–25 (MKTMRKQIYKKAYWLLLPFLPLALA), serve as a signal peptide directing secretion. Disordered regions lie at residues 162–207 (SLAK…GFKL) and 224–261 (EPID…GGSS). A compositionally biased stretch (basic and acidic residues) spans 164-175 (AKEKGKTQREVH). Polar residues predominate over residues 179 to 207 (GQANQWTSQRNQHDLNNNPSPNASTGFKL). A helical transmembrane segment spans residues 946–966 (VGSSVGILFILLVLGLGIGIP). Residues 1024–1053 (AAFLKPPVQPPSKPEGEQKAVEVKSEETKS) form a disordered region. A compositionally biased stretch (basic and acidic residues) spans 1037–1053 (PEGEQKAVEVKSEETKS).

It localises to the cell membrane. This chain is Mgp-operon protein 3, found in Mycoplasma genitalium (strain ATCC 33530 / DSM 19775 / NCTC 10195 / G37) (Mycoplasmoides genitalium).